Reading from the N-terminus, the 467-residue chain is Light-independent protochlorophyllide reductase subunit N (467 aa).

Residues Cys-22, Cys-47, and Cys-107 each coordinate [4Fe-4S] cluster.

The protein belongs to the BchN/ChlN family. As to quaternary structure, protochlorophyllide reductase is composed of three subunits; ChlL, ChlN and ChlB. Forms a heterotetramer of two ChlB and two ChlN subunits. [4Fe-4S] cluster serves as cofactor.

It is found in the plastid. The protein resides in the chloroplast. It carries out the reaction chlorophyllide a + oxidized 2[4Fe-4S]-[ferredoxin] + 2 ADP + 2 phosphate = protochlorophyllide a + reduced 2[4Fe-4S]-[ferredoxin] + 2 ATP + 2 H2O. It participates in porphyrin-containing compound metabolism; chlorophyll biosynthesis (light-independent). In terms of biological role, component of the dark-operative protochlorophyllide reductase (DPOR) that uses Mg-ATP and reduced ferredoxin to reduce ring D of protochlorophyllide (Pchlide) to form chlorophyllide a (Chlide). This reaction is light-independent. The NB-protein (ChlN-ChlB) is the catalytic component of the complex. This chain is Light-independent protochlorophyllide reductase subunit N, found in Pinus thunbergii (Japanese black pine).